The following is a 505-amino-acid chain: Glutamyl-tRNA(Gln) amidotransferase subunit B, mitochondrial (505 aa).

It belongs to the GatB/GatE family. GatB subfamily. Subunit of the heterotrimeric GatCAB amidotransferase (AdT) complex, composed of A, B and C subunits.

It is found in the mitochondrion. It carries out the reaction L-glutamyl-tRNA(Gln) + L-glutamine + ATP + H2O = L-glutaminyl-tRNA(Gln) + L-glutamate + ADP + phosphate + H(+). Functionally, allows the formation of correctly charged Gln-tRNA(Gln) through the transamidation of misacylated Glu-tRNA(Gln) in the mitochondria. The reaction takes place in the presence of glutamine and ATP through an activated gamma-phospho-Glu-tRNA(Gln). The chain is Glutamyl-tRNA(Gln) amidotransferase subunit B, mitochondrial from Schizosaccharomyces japonicus (strain yFS275 / FY16936) (Fission yeast).